The chain runs to 278 residues: Cytoplasmic envelopment protein 1 (278 aa).

This sequence belongs to the herpesviridae cytoplasmic envelopment protein 1 family. As to quaternary structure, interacts with BSRF1 tegument protein; the BBRF2-BSRF1 complexes oligomerize and might play a role in tethering the viral nucleocapsids to the host Golgi membrane during secondary envelopment.

The protein localises to the virion. It is found in the virion tegument. The protein resides in the host cytoplasm. It localises to the host Golgi apparatus. Plays a critical role in cytoplasmic virus egress. Participates in the final step of tegumentation and envelope acquisition within the host cytoplasm. This Homo sapiens (Human) protein is Cytoplasmic envelopment protein 1.